The following is a 233-amino-acid chain: Lipoprotein-releasing system ATP-binding protein LolD (233 aa).

Positions 6-233 (LQCDNLCKRY…TAELSLMGAE (228 aa)) constitute an ABC transporter domain. 42-49 (GSSGSGKS) provides a ligand contact to ATP.

This sequence belongs to the ABC transporter superfamily. Lipoprotein translocase (TC 3.A.1.125) family. The complex is composed of two ATP-binding proteins (LolD) and two transmembrane proteins (LolC and LolE).

The protein resides in the cell inner membrane. Part of the ABC transporter complex LolCDE involved in the translocation of mature outer membrane-directed lipoproteins, from the inner membrane to the periplasmic chaperone, LolA. Responsible for the formation of the LolA-lipoprotein complex in an ATP-dependent manner. The sequence is that of Lipoprotein-releasing system ATP-binding protein LolD from Escherichia coli O6:K15:H31 (strain 536 / UPEC).